Consider the following 272-residue polypeptide: MQVLKTIEELQNIRKNSLGKVGLVPTMGALHNGHISLIKQARNENDIVIVSIFVNPTQFLPGEDLDAYPRRDEADKKICQMCKVNYVFMPEISTMYTKEEVLVKAPNKSYILEGKTRPGHFDGVLQVVLKLFNLTQPTNAYFGKKDAQQLTLIQQMVKNFFLPINIVPCDIVREEDGLALSSRNIYLNPTQRKDALLISKSLYMAGSLISSGERSVKAVKDKIYEVMSILDVEYVAIVDKEFNELETIEPTNTIILVVARFGNTRLLDNIWL.

Position 27-34 (27-34 (MGALHNGH)) interacts with ATP. The active-site Proton donor is H34. Q58 contacts (R)-pantoate. Q58 lines the beta-alanine pocket. 143–146 (GKKD) is a binding site for ATP. Residue Q149 participates in (R)-pantoate binding. ATP contacts are provided by residues V172 and 180–183 (LSSR).

The protein belongs to the pantothenate synthetase family. As to quaternary structure, homodimer.

The protein resides in the cytoplasm. The catalysed reaction is (R)-pantoate + beta-alanine + ATP = (R)-pantothenate + AMP + diphosphate + H(+). It functions in the pathway cofactor biosynthesis; (R)-pantothenate biosynthesis; (R)-pantothenate from (R)-pantoate and beta-alanine: step 1/1. Catalyzes the condensation of pantoate with beta-alanine in an ATP-dependent reaction via a pantoyl-adenylate intermediate. The chain is Pantothenate synthetase from Aliarcobacter butzleri (strain RM4018) (Arcobacter butzleri).